The primary structure comprises 281 residues: Microtubule-associated protein RP/EB family member 3 (281 aa).

In terms of domain architecture, Calponin-homology (CH) spans 14–116 (NLSRHDMLAW…FIQWFKKFFD (103 aa)). A disordered region spans residues 157–181 (VPQRTSPTGPKNMQTSGRLSNVAPP). Positions 158–175 (PQRTSPTGPKNMQTSGRL) are enriched in polar residues. Phosphoserine occurs at positions 162 and 176. Residues 194–264 (GGHETDAQIL…LYATEEGFAP (71 aa)) form the EB1 C-terminal domain. Residues 217–260 (DGLEKERDFYFSKLRDIELICQEHESENSPVISGIIGILYATEE) are APC-binding. The interval 217-281 (DGLEKERDFY…EHQQEDQDEY (65 aa)) is DCTN1-binding. A disordered region spans residues 261–281 (GFAPPEDDEIEEHQQEDQDEY). A compositionally biased stretch (basic and acidic residues) spans 272-281 (EHQQEDQDEY).

It belongs to the MAPRE family. Homodimer. Heterodimer with MAPRE1. Binds monomeric and polymerized GTP-bound tubulin. Interacts with APC2. Interacts with DCTN1 and SRCIN1. Binds to the C-terminal domain of APC. Interacts (via C-terminus) with CLIP1. Interacts with SLAIN2 and SLAIN1. Interacts with AKAP9. Interacts with PDE4DIP. Interacts with PDE4DIP isoform 13/MMG8/SMYLE; this interaction is required for its recruitment to the Golgi apparatus. Predominantly expressed in brain and muscle.

It is found in the cytoplasm. It localises to the cytoskeleton. Functionally, plus-end tracking protein (+TIP) that binds to the plus-end of microtubules and regulates the dynamics of the microtubule cytoskeleton. Promotes microtubule growth. May be involved in spindle function by stabilizing microtubules and anchoring them at centrosomes. Also acts as a regulator of minus-end microtubule organization: interacts with the complex formed by AKAP9 and PDE4DIP, leading to recruit CAMSAP2 to the Golgi apparatus, thereby tethering non-centrosomal minus-end microtubules to the Golgi, an important step for polarized cell movement. Promotes elongation of CAMSAP2-decorated microtubule stretches on the minus-end of microtubules. The protein is Microtubule-associated protein RP/EB family member 3 (MAPRE3) of Homo sapiens (Human).